The chain runs to 417 residues: Serine hydroxymethyltransferase (417 aa).

Residues leucine 121 and 125–127 (GHL) each bind (6S)-5,6,7,8-tetrahydrofolate. Residue lysine 229 is modified to N6-(pyridoxal phosphate)lysine. Residue 355–357 (SPF) coordinates (6S)-5,6,7,8-tetrahydrofolate.

The protein belongs to the SHMT family. In terms of assembly, homodimer. Requires pyridoxal 5'-phosphate as cofactor.

It is found in the cytoplasm. It catalyses the reaction (6R)-5,10-methylene-5,6,7,8-tetrahydrofolate + glycine + H2O = (6S)-5,6,7,8-tetrahydrofolate + L-serine. Its pathway is one-carbon metabolism; tetrahydrofolate interconversion. It functions in the pathway amino-acid biosynthesis; glycine biosynthesis; glycine from L-serine: step 1/1. Its function is as follows. Catalyzes the reversible interconversion of serine and glycine with tetrahydrofolate (THF) serving as the one-carbon carrier. This reaction serves as the major source of one-carbon groups required for the biosynthesis of purines, thymidylate, methionine, and other important biomolecules. Also exhibits THF-independent aldolase activity toward beta-hydroxyamino acids, producing glycine and aldehydes, via a retro-aldol mechanism. This chain is Serine hydroxymethyltransferase, found in Stenotrophomonas maltophilia (strain R551-3).